The following is a 183-amino-acid chain: Dual-action ribosomal maturation protein DarP (183 aa).

Belongs to the DarP family.

The protein resides in the cytoplasm. Its function is as follows. Member of a network of 50S ribosomal subunit biogenesis factors which assembles along the 30S-50S interface, preventing incorrect 23S rRNA structures from forming. Promotes peptidyl transferase center (PTC) maturation. In Escherichia coli O81 (strain ED1a), this protein is Dual-action ribosomal maturation protein DarP.